A 582-amino-acid chain; its full sequence is Guanine nucleotide-binding protein-like NSN1 (582 aa).

The segment covering 1–46 has biased composition (basic residues); the sequence is MVKRSKKSKSKRVTLKQKHKVLKKVKEHHKKKAKDAKKLGLHRKPR. Positions 1–58 are disordered; sequence MVKRSKKSKSKRVTLKQKHKVLKKVKEHHKKKAKDAKKLGLHRKPRVEKDPGIPNDWP. The tract at residues 2–49 is basic; that stretch reads VKRSKKSKSKRVTLKQKHKVLKKVKEHHKKKAKDAKKLGLHRKPRVEK. 3 short sequence motifs (nuclear localization signal) span residues 5 to 12, 22 to 29, and 69 to 76; these read SKKSKSKR, LKKVKEHH, and VRRARALE. The stretch at 15 to 94 forms a coiled coil; it reads LKQKHKVLKK…RKERAKKRKL (80 aa). One can recognise a CP-type G domain in the interval 127–311; that stretch reads YKELVKVIEL…LLDCPGVVML (185 aa). The DARXP motif signature appears at 145–149; sequence DARDP. The interval 175-178 is G4; it reads NKID. 175–178 serves as a coordination point for GTP; it reads NKID. Positions 202-204 are G5; the sequence is KCS. The tract at residues 260 to 267 is G1; sequence GLPNVGKS. Residue 263–268 coordinates GTP; sequence NVGKSS. Residues 281–456 are intermediate; sequence VGATPGLTRS…NEFNPVIIPS (176 aa). A G2 region spans residues 286–290; that stretch reads GLTRS. GTP-binding positions include 304–307 and glycine 307; that span reads DCPG. Positions 304 to 307 are G3; that stretch reads DCPG. The segment at 463–551 is acidic; the sequence is DETMIEDESK…EEDLMDGDYD (89 aa). The segment at 469–545 is disordered; the sequence is DESKTQTEEE…KKAGADEEDL (77 aa). Positions 476-496 are enriched in acidic residues; it reads EEEAEHESDDDESMGGEEEEE. A compositionally biased stretch (basic and acidic residues) spans 497 to 506; the sequence is AGKTKEKSET. Residues 515–537 are a coiled coil; that stretch reads AAESMLNTKKQKAEKKKRKKAKK. The short motif at 522–529 is the Nuclear localization signal 4 element; sequence TKKQKAEK. The span at 523-537 shows a compositional bias: basic residues; sequence KKQKAEKKKRKKAKK.

It belongs to the TRAFAC class YlqF/YawG GTPase family. Interacts with EBP2 and PES. As to expression, mostly expressed in flowers, siliques and inflorescence apex, and, to a lower extent, in stems and leaves.

It is found in the nucleus. Its subcellular location is the nucleolus. Functionally, involved in the differentiation of epidermal cells, probably via the regulation of the expression of meristem-related genes (e.g. CLV3, STM, KNAT1, CUC2 and AG) and of leaf polarity-related genes (e.g. YAB5, FIL, AS2, PHB and PHV). May play a role in regulating cellular proliferation. Necessary for flower development, probably by preventing apical dominance through the down-regulation of AG expression. Required for embryogenesis, leaf and cotyledon development, as well as for leaf polarity establishment. Plays an important role in plant growth and senescence by modulating ribosome biogenesis in nucleolus. Possesses GTPAse activity in vitro. Possesses RNA binding activity in vitro. Associates with ribosomes. This chain is Guanine nucleotide-binding protein-like NSN1, found in Arabidopsis thaliana (Mouse-ear cress).